A 315-amino-acid polypeptide reads, in one-letter code: 4-diphosphocytidyl-2-C-methyl-D-erythritol kinase (315 aa).

Residue K8 is part of the active site. 93–103 is an ATP binding site; that stretch reads PVAAGLAGGSS. The active site involves D135.

The protein belongs to the GHMP kinase family. IspE subfamily.

It catalyses the reaction 4-CDP-2-C-methyl-D-erythritol + ATP = 4-CDP-2-C-methyl-D-erythritol 2-phosphate + ADP + H(+). It functions in the pathway isoprenoid biosynthesis; isopentenyl diphosphate biosynthesis via DXP pathway; isopentenyl diphosphate from 1-deoxy-D-xylulose 5-phosphate: step 3/6. Its function is as follows. Catalyzes the phosphorylation of the position 2 hydroxy group of 4-diphosphocytidyl-2C-methyl-D-erythritol. This Heliobacterium modesticaldum (strain ATCC 51547 / Ice1) protein is 4-diphosphocytidyl-2-C-methyl-D-erythritol kinase.